The sequence spans 322 residues: Cysteine protease yopT1 (322 aa).

Active-site residues include cysteine 139, histidine 258, and aspartate 274.

It belongs to the peptidase C58 family. As to quaternary structure, interacts with human ARHA.

It is found in the secreted. In terms of biological role, cysteine protease, which is translocated into infected cells and plays a central role in pathogenesis by cleaving the C-terminus end of the human small GTPase RhoA/ARHA, a regulator of cytoskeleton. Once cleaved, ARHA loses its lipid modification, and is released from the cell membrane, leading to the subsequent disruption of actin cytoskeleton of the host cell. The sequence is that of Cysteine protease yopT1 (yopT1) from Yersinia enterocolitica.